The sequence spans 393 residues: Riboflavin biosynthesis protein RibBA (393 aa).

Positions 1-200 (MQFDNIDSAL…IDDLIEYRKK (200 aa)) are DHBP synthase. D-ribulose 5-phosphate-binding positions include 27-28 (RE), aspartate 32, 139-143 (RNGHT), and glutamate 163. Residue glutamate 28 participates in Mg(2+) binding. Residue histidine 142 participates in Mg(2+) binding. Positions 201 to 393 (LEPEIEFKAK…TKKIKMGHLI (193 aa)) are GTP cyclohydrolase II. Position 249–253 (249–253 (RLHSA)) interacts with GTP. The Zn(2+) site is built by cysteine 254, cysteine 265, and cysteine 267. Residues glutamine 270, 291 to 293 (EGR), and threonine 313 each bind GTP. The Proton acceptor; for GTP cyclohydrolase activity role is filled by aspartate 325. Arginine 327 (nucleophile; for GTP cyclohydrolase activity) is an active-site residue. 2 residues coordinate GTP: serine 348 and lysine 353.

This sequence in the N-terminal section; belongs to the DHBP synthase family. In the C-terminal section; belongs to the GTP cyclohydrolase II family. Mg(2+) serves as cofactor. Mn(2+) is required as a cofactor. Requires Zn(2+) as cofactor.

It carries out the reaction D-ribulose 5-phosphate = (2S)-2-hydroxy-3-oxobutyl phosphate + formate + H(+). It catalyses the reaction GTP + 4 H2O = 2,5-diamino-6-hydroxy-4-(5-phosphoribosylamino)-pyrimidine + formate + 2 phosphate + 3 H(+). It participates in cofactor biosynthesis; riboflavin biosynthesis; 2-hydroxy-3-oxobutyl phosphate from D-ribulose 5-phosphate: step 1/1. The protein operates within cofactor biosynthesis; riboflavin biosynthesis; 5-amino-6-(D-ribitylamino)uracil from GTP: step 1/4. In terms of biological role, catalyzes the conversion of D-ribulose 5-phosphate to formate and 3,4-dihydroxy-2-butanone 4-phosphate. Its function is as follows. Catalyzes the conversion of GTP to 2,5-diamino-6-ribosylamino-4(3H)-pyrimidinone 5'-phosphate (DARP), formate and pyrophosphate. The polypeptide is Riboflavin biosynthesis protein RibBA (Staphylococcus aureus (strain Mu50 / ATCC 700699)).